Here is a 351-residue protein sequence, read N- to C-terminus: Hydroxymethylglutaryl-CoA synthase (351 aa).

E80 (proton donor/acceptor) is an active-site residue. C112 serves as the catalytic Acyl-thioester intermediate. (3S)-3-hydroxy-3-methylglutaryl-CoA is bound by residues C112 and S153. Residue R199 participates in CoA binding. Residues T201 and H234 each contribute to the (3S)-3-hydroxy-3-methylglutaryl-CoA site. The active-site Proton donor/acceptor is the H234. Residue K239 coordinates CoA. (3S)-3-hydroxy-3-methylglutaryl-CoA is bound by residues R243, N266, and S296.

This sequence belongs to the thiolase-like superfamily. Archaeal HMG-CoA synthase family. Interacts with acetoacetyl-CoA thiolase that catalyzes the precedent step in the pathway and with a DUF35 protein. The acetoacetyl-CoA thiolase/HMG-CoA synthase complex channels the intermediate via a fused CoA-binding site, which allows for efficient coupling of the endergonic thiolase reaction with the exergonic HMGCS reaction.

The enzyme catalyses acetoacetyl-CoA + acetyl-CoA + H2O = (3S)-3-hydroxy-3-methylglutaryl-CoA + CoA + H(+). The protein operates within metabolic intermediate biosynthesis; (R)-mevalonate biosynthesis; (R)-mevalonate from acetyl-CoA: step 2/3. Catalyzes the condensation of acetyl-CoA with acetoacetyl-CoA to form 3-hydroxy-3-methylglutaryl-CoA (HMG-CoA). Functions in the mevalonate (MVA) pathway leading to isopentenyl diphosphate (IPP), a key precursor for the biosynthesis of isoprenoid compounds that are building blocks of archaeal membrane lipids. This Thermoplasma volcanium (strain ATCC 51530 / DSM 4299 / JCM 9571 / NBRC 15438 / GSS1) protein is Hydroxymethylglutaryl-CoA synthase.